Consider the following 262-residue polypeptide: Glycine and serine-rich protein 1 (262 aa).

A signal peptide spans 1–21 (MVIKTSLTVLILGVLIAEVFC). Asn-59 carries an N-linked (GlcNAc...) asparagine glycan. The tract at residues 172-212 (SNGGWGAETGSSGGMNSQSSGSQSGSWGSSSGSWGGSSGSM) is disordered. The segment covering 174–184 (GGWGAETGSSG) has biased composition (gly residues). The segment covering 185 to 203 (GMNSQSSGSQSGSWGSSSG) has biased composition (low complexity).

In terms of tissue distribution, component of the acid-insoluble and acid-soluble organic matrix of calcified layers of the shell (at protein level).

It localises to the secreted. The polypeptide is Glycine and serine-rich protein 1 (Lottia gigantea (Giant owl limpet)).